We begin with the raw amino-acid sequence, 319 residues long: Biotin synthase (319 aa).

One can recognise a Radical SAM core domain in the interval I44–R273. Residues C62, C66, and C69 each coordinate [4Fe-4S] cluster. [2Fe-2S] cluster contacts are provided by S106, C138, C198, and R268.

It belongs to the radical SAM superfamily. Biotin synthase family. As to quaternary structure, homodimer. It depends on [4Fe-4S] cluster as a cofactor. [2Fe-2S] cluster is required as a cofactor.

The catalysed reaction is (4R,5S)-dethiobiotin + (sulfur carrier)-SH + 2 reduced [2Fe-2S]-[ferredoxin] + 2 S-adenosyl-L-methionine = (sulfur carrier)-H + biotin + 2 5'-deoxyadenosine + 2 L-methionine + 2 oxidized [2Fe-2S]-[ferredoxin]. It participates in cofactor biosynthesis; biotin biosynthesis; biotin from 7,8-diaminononanoate: step 2/2. In terms of biological role, catalyzes the conversion of dethiobiotin (DTB) to biotin by the insertion of a sulfur atom into dethiobiotin via a radical-based mechanism. The chain is Biotin synthase from Clostridium perfringens (strain ATCC 13124 / DSM 756 / JCM 1290 / NCIMB 6125 / NCTC 8237 / Type A).